Reading from the N-terminus, the 515-residue chain is 2-isopropylmalate synthase (515 aa).

The 264-residue stretch at 5–268 (VIIFDTTLRD…VCGIDASQIV (264 aa)) folds into the Pyruvate carboxyltransferase domain. Positions 14, 202, 204, and 239 each coordinate Mn(2+). A regulatory domain region spans residues 394-515 (HFISLSQHSE…QAKLNAQMAP (122 aa)).

It belongs to the alpha-IPM synthase/homocitrate synthase family. LeuA type 1 subfamily. As to quaternary structure, homodimer. Requires Mn(2+) as cofactor.

The protein resides in the cytoplasm. The enzyme catalyses 3-methyl-2-oxobutanoate + acetyl-CoA + H2O = (2S)-2-isopropylmalate + CoA + H(+). It functions in the pathway amino-acid biosynthesis; L-leucine biosynthesis; L-leucine from 3-methyl-2-oxobutanoate: step 1/4. Catalyzes the condensation of the acetyl group of acetyl-CoA with 3-methyl-2-oxobutanoate (2-ketoisovalerate) to form 3-carboxy-3-hydroxy-4-methylpentanoate (2-isopropylmalate). The protein is 2-isopropylmalate synthase of Polynucleobacter asymbioticus (strain DSM 18221 / CIP 109841 / QLW-P1DMWA-1) (Polynucleobacter necessarius subsp. asymbioticus).